The primary structure comprises 470 residues: tRNA(Ile)-lysidine synthase (470 aa).

ATP is bound at residue 32–37; the sequence is SGGVDS.

This sequence belongs to the tRNA(Ile)-lysidine synthase family.

It is found in the cytoplasm. It catalyses the reaction cytidine(34) in tRNA(Ile2) + L-lysine + ATP = lysidine(34) in tRNA(Ile2) + AMP + diphosphate + H(+). Functionally, ligates lysine onto the cytidine present at position 34 of the AUA codon-specific tRNA(Ile) that contains the anticodon CAU, in an ATP-dependent manner. Cytidine is converted to lysidine, thus changing the amino acid specificity of the tRNA from methionine to isoleucine. The chain is tRNA(Ile)-lysidine synthase from Shewanella woodyi (strain ATCC 51908 / MS32).